The primary structure comprises 142 residues: Ribosomal RNA large subunit methyltransferase H (142 aa).

Leu55 and Gly87 together coordinate S-adenosyl-L-methionine.

It belongs to the RNA methyltransferase RlmH family. In terms of assembly, homodimer.

It is found in the cytoplasm. It catalyses the reaction pseudouridine(1915) in 23S rRNA + S-adenosyl-L-methionine = N(3)-methylpseudouridine(1915) in 23S rRNA + S-adenosyl-L-homocysteine + H(+). Its function is as follows. Specifically methylates the pseudouridine at position 1915 (m3Psi1915) in 23S rRNA. The polypeptide is Ribosomal RNA large subunit methyltransferase H (Sphingopyxis alaskensis (strain DSM 13593 / LMG 18877 / RB2256) (Sphingomonas alaskensis)).